We begin with the raw amino-acid sequence, 120 residues long: Large ribosomal subunit protein uL18 (120 aa).

This sequence belongs to the universal ribosomal protein uL18 family. Part of the 50S ribosomal subunit; part of the 5S rRNA/L5/L18/L25 subcomplex. Contacts the 5S and 23S rRNAs.

This is one of the proteins that bind and probably mediate the attachment of the 5S RNA into the large ribosomal subunit, where it forms part of the central protuberance. In Geobacillus kaustophilus (strain HTA426), this protein is Large ribosomal subunit protein uL18.